A 337-amino-acid chain; its full sequence is Anthranilate phosphoribosyltransferase (337 aa).

5-phospho-alpha-D-ribose 1-diphosphate contacts are provided by residues G80, 83–84 (GD), T88, 90–93 (NIST), 108–116 (KHGNRAVSS), and S120. G80 contributes to the anthranilate binding site. S92 is a binding site for Mg(2+). N111 provides a ligand contact to anthranilate. Residue R166 coordinates anthranilate. Mg(2+) is bound by residues D224 and E225.

The protein belongs to the anthranilate phosphoribosyltransferase family. Homodimer. Mg(2+) serves as cofactor.

It carries out the reaction N-(5-phospho-beta-D-ribosyl)anthranilate + diphosphate = 5-phospho-alpha-D-ribose 1-diphosphate + anthranilate. Its pathway is amino-acid biosynthesis; L-tryptophan biosynthesis; L-tryptophan from chorismate: step 2/5. In terms of biological role, catalyzes the transfer of the phosphoribosyl group of 5-phosphorylribose-1-pyrophosphate (PRPP) to anthranilate to yield N-(5'-phosphoribosyl)-anthranilate (PRA). This chain is Anthranilate phosphoribosyltransferase, found in Anaeromyxobacter dehalogenans (strain 2CP-C).